We begin with the raw amino-acid sequence, 542 residues long: CTP synthase (542 aa).

Positions 1-265 are amidoligase domain; sequence MTRYIFVTGG…DDFVVERFGL (265 aa). Serine 13 contacts CTP. Serine 13 lines the UTP pocket. ATP-binding positions include 14 to 19 and aspartate 71; that span reads SLGKGI. The Mg(2+) site is built by aspartate 71 and glutamate 139. Residues 146-148, 186-191, and lysine 222 each bind CTP; these read DIE and KTKPTQ. Residues 186 to 191 and lysine 222 each bind UTP; that span reads KTKPTQ. One can recognise a Glutamine amidotransferase type-1 domain in the interval 290-541; the sequence is TIAMVGKYME…VKAALAQKNK (252 aa). Residue glycine 351 coordinates L-glutamine. The active-site Nucleophile; for glutamine hydrolysis is the cysteine 378. L-glutamine is bound by residues 379 to 382, glutamate 402, and arginine 469; that span reads LGMQ. Catalysis depends on residues histidine 514 and glutamate 516.

It belongs to the CTP synthase family. In terms of assembly, homotetramer.

It catalyses the reaction UTP + L-glutamine + ATP + H2O = CTP + L-glutamate + ADP + phosphate + 2 H(+). The catalysed reaction is L-glutamine + H2O = L-glutamate + NH4(+). The enzyme catalyses UTP + NH4(+) + ATP = CTP + ADP + phosphate + 2 H(+). It functions in the pathway pyrimidine metabolism; CTP biosynthesis via de novo pathway; CTP from UDP: step 2/2. Its activity is regulated as follows. Allosterically activated by GTP, when glutamine is the substrate; GTP has no effect on the reaction when ammonia is the substrate. The allosteric effector GTP functions by stabilizing the protein conformation that binds the tetrahedral intermediate(s) formed during glutamine hydrolysis. Inhibited by the product CTP, via allosteric rather than competitive inhibition. Its function is as follows. Catalyzes the ATP-dependent amination of UTP to CTP with either L-glutamine or ammonia as the source of nitrogen. Regulates intracellular CTP levels through interactions with the four ribonucleotide triphosphates. This chain is CTP synthase, found in Pseudomonas putida (strain W619).